Consider the following 209-residue polypeptide: D-aminoacyl-tRNA deacylase 1 (209 aa).

A Gly-cisPro motif, important for rejection of L-amino acids motif is present at residues 139–140; the sequence is GP. A disordered region spans residues 142 to 209; sequence TIELESPAPG…EGDVSSEREP (68 aa). Composition is skewed to basic and acidic residues over residues 159–170 and 181–194; these read QLSKLEKQQQRK and SSKERNAPRKEDRS. 3 positions are modified to phosphoserine: Ser197, Ser204, and Ser205.

It belongs to the DTD family. As to quaternary structure, homodimer. Interacts with CDC45 and TOPBP1. Post-translationally, preferentially phosphorylated in cells arrested early in S phase. Phosphorylation in the C-terminus weakens the interaction with CDC45.

Its subcellular location is the nucleus. The protein localises to the cytoplasm. The catalysed reaction is glycyl-tRNA(Ala) + H2O = tRNA(Ala) + glycine + H(+). The enzyme catalyses a D-aminoacyl-tRNA + H2O = a tRNA + a D-alpha-amino acid + H(+). Functionally, an aminoacyl-tRNA editing enzyme that deacylates mischarged D-aminoacyl-tRNAs. Also deacylates mischarged glycyl-tRNA(Ala), protecting cells against glycine mischarging by AlaRS. Acts via tRNA-based rather than protein-based catalysis; rejects L-amino acids rather than detecting D-amino acids in the active site. By recycling D-aminoacyl-tRNA to D-amino acids and free tRNA molecules, this enzyme counteracts the toxicity associated with the formation of D-aminoacyl-tRNA entities in vivo and helps enforce protein L-homochirality. Its function is as follows. ATPase involved in DNA replication, may facilitate loading of CDC45 onto pre-replication complexes. This chain is D-aminoacyl-tRNA deacylase 1 (Dtd1), found in Mus musculus (Mouse).